The sequence spans 342 residues: Periplasmic protein TorT (342 aa).

The signal sequence occupies residues 1 to 18 (MRVLLFLLLSLFMLPAFS).

Belongs to the bacterial solute-binding protein 2 family.

The protein resides in the periplasm. Upon binding a putative inducer it probably interacts with TorS and allows it to play a role in the induction of the torCAD operon for trimethylamine N-oxide reductase. The chain is Periplasmic protein TorT (torT) from Escherichia coli (strain K12).